The chain runs to 336 residues: tRNA N6-adenosine threonylcarbamoyltransferase (336 aa).

Fe cation-binding residues include H114 and H118. Substrate contacts are provided by residues 136-140 (LVSGG), D169, G182, D186, and N275. D301 contributes to the Fe cation binding site.

It belongs to the KAE1 / TsaD family. Fe(2+) serves as cofactor.

Its subcellular location is the cytoplasm. The catalysed reaction is L-threonylcarbamoyladenylate + adenosine(37) in tRNA = N(6)-L-threonylcarbamoyladenosine(37) in tRNA + AMP + H(+). Its function is as follows. Required for the formation of a threonylcarbamoyl group on adenosine at position 37 (t(6)A37) in tRNAs that read codons beginning with adenine. Is involved in the transfer of the threonylcarbamoyl moiety of threonylcarbamoyl-AMP (TC-AMP) to the N6 group of A37, together with TsaE and TsaB. TsaD likely plays a direct catalytic role in this reaction. The chain is tRNA N6-adenosine threonylcarbamoyltransferase from Streptococcus pneumoniae serotype 2 (strain D39 / NCTC 7466).